Reading from the N-terminus, the 610-residue chain is Elongation factor 4 (610 aa).

Positions 12-194 (EKIRNFSIIA…QIVEKVPAPQ (183 aa)) constitute a tr-type G domain. GTP-binding positions include 24–29 (DHGKST) and 141–144 (NKID).

This sequence belongs to the TRAFAC class translation factor GTPase superfamily. Classic translation factor GTPase family. LepA subfamily.

Its subcellular location is the cell membrane. The enzyme catalyses GTP + H2O = GDP + phosphate + H(+). In terms of biological role, required for accurate and efficient protein synthesis under certain stress conditions. May act as a fidelity factor of the translation reaction, by catalyzing a one-codon backward translocation of tRNAs on improperly translocated ribosomes. Back-translocation proceeds from a post-translocation (POST) complex to a pre-translocation (PRE) complex, thus giving elongation factor G a second chance to translocate the tRNAs correctly. Binds to ribosomes in a GTP-dependent manner. This Streptococcus thermophilus (strain CNRZ 1066) protein is Elongation factor 4.